Reading from the N-terminus, the 557-residue chain is UvrABC system protein C (557 aa).

Positions 14 to 89 constitute a GIY-YIG domain; the sequence is EEPGVYIFKN…IKKYRPKYNV (76 aa). Residues 194-229 form the UVR domain; the sequence is EEVFDYLKEKMETHSKMLDFENAAKYRDLLLNLSNV.

The protein belongs to the UvrC family. Interacts with UvrB in an incision complex.

It is found in the cytoplasm. Its function is as follows. The UvrABC repair system catalyzes the recognition and processing of DNA lesions. UvrC both incises the 5' and 3' sides of the lesion. The N-terminal half is responsible for the 3' incision and the C-terminal half is responsible for the 5' incision. The polypeptide is UvrABC system protein C (Thermotoga sp. (strain RQ2)).